Here is a 223-residue protein sequence, read N- to C-terminus: Thiopurine S-methyltransferase (223 aa).

Residues tryptophan 10, leucine 45, glutamate 66, and arginine 127 each contribute to the S-adenosyl-L-methionine site.

This sequence belongs to the class I-like SAM-binding methyltransferase superfamily. TPMT family.

It is found in the cytoplasm. The catalysed reaction is S-adenosyl-L-methionine + a thiopurine = S-adenosyl-L-homocysteine + a thiopurine S-methylether.. The protein is Thiopurine S-methyltransferase of Shewanella woodyi (strain ATCC 51908 / MS32).